A 208-amino-acid chain; its full sequence is N-(5'-phosphoribosyl)anthranilate isomerase (208 aa).

This sequence belongs to the TrpF family.

The catalysed reaction is N-(5-phospho-beta-D-ribosyl)anthranilate = 1-(2-carboxyphenylamino)-1-deoxy-D-ribulose 5-phosphate. It functions in the pathway amino-acid biosynthesis; L-tryptophan biosynthesis; L-tryptophan from chorismate: step 3/5. The chain is N-(5'-phosphoribosyl)anthranilate isomerase from Staphylococcus haemolyticus (strain JCSC1435).